A 454-amino-acid polypeptide reads, in one-letter code: Histidine--tRNA ligase (454 aa).

The segment at 434 to 454 (ADAGAWNPPTEDLHPGVIGTW) is disordered.

The protein belongs to the class-II aminoacyl-tRNA synthetase family. As to quaternary structure, homodimer.

It localises to the cytoplasm. The enzyme catalyses tRNA(His) + L-histidine + ATP = L-histidyl-tRNA(His) + AMP + diphosphate + H(+). This is Histidine--tRNA ligase (hisS) from Cutibacterium acnes (strain DSM 16379 / KPA171202) (Propionibacterium acnes).